A 93-amino-acid chain; its full sequence is Alpha-elapitoxin-Oh3a (93 aa).

A signal peptide spans 1 to 21 (MKTLLLTLVVVTIVCLDLGYT). Intrachain disulfides connect C24–C42, C35–C63, C48–C52, C67–C78, and C79–C84.

This sequence belongs to the three-finger toxin family. Long-chain subfamily. Type II alpha-neurotoxin sub-subfamily. As to expression, expressed by the venom gland.

The protein resides in the secreted. In terms of biological role, binds to muscular and neuronal nicotinic acetylcholine receptor (nAChR) and inhibits acetylcholine from binding to the receptor, thereby impairing neuromuscular and neuronal transmission. Pseudo-irreversibly inhibits twitches in chick biventer cervicis nerve-muscle preparations in a concentration-dependent manner. This chain is Alpha-elapitoxin-Oh3a, found in Ophiophagus hannah (King cobra).